The following is a 295-amino-acid chain: Glycine--tRNA ligase alpha subunit (295 aa).

It belongs to the class-II aminoacyl-tRNA synthetase family. In terms of assembly, tetramer of two alpha and two beta subunits.

It is found in the cytoplasm. It carries out the reaction tRNA(Gly) + glycine + ATP = glycyl-tRNA(Gly) + AMP + diphosphate. The protein is Glycine--tRNA ligase alpha subunit of Bacillus licheniformis (strain ATCC 14580 / DSM 13 / JCM 2505 / CCUG 7422 / NBRC 12200 / NCIMB 9375 / NCTC 10341 / NRRL NRS-1264 / Gibson 46).